The primary structure comprises 358 residues: Mitogen-activated protein kinase hog-1 (358 aa).

Residues 20 to 299 (YSDLQPVGMG…ATEALSHEYL (280 aa)) enclose the Protein kinase domain. Residues 26–34 (VGMGAFGLV) and Lys49 each bind ATP. Asp141 serves as the catalytic Proton acceptor. Thr171 is subject to Phosphothreonine. Positions 171-173 (TGY) match the TXY motif. At Tyr173 the chain carries Phosphotyrosine.

This sequence belongs to the protein kinase superfamily. Ser/Thr protein kinase family. MAP kinase subfamily. HOG1 sub-subfamily. Mg(2+) is required as a cofactor. Post-translationally, dually phosphorylated on Thr-171 and Tyr-173, which activates the enzyme. Phosphorylation is induced by fungicides and osmotic stress.

The protein localises to the cytoplasm. The protein resides in the nucleus. It carries out the reaction L-seryl-[protein] + ATP = O-phospho-L-seryl-[protein] + ADP + H(+). The enzyme catalyses L-threonyl-[protein] + ATP = O-phospho-L-threonyl-[protein] + ADP + H(+). With respect to regulation, activated by tyrosine and threonine phosphorylation. In terms of biological role, proline-directed serine/threonine-protein kinase involved in a signal transduction pathway that is activated by changes in the osmolarity of the extracellular environment. Controls osmotic regulation of transcription of target genes. Involved in ion flux-mediated turgor regulation. The polypeptide is Mitogen-activated protein kinase hog-1 (hog-1) (Neurospora crassa (strain ATCC 24698 / 74-OR23-1A / CBS 708.71 / DSM 1257 / FGSC 987)).